The chain runs to 195 residues: Small ribosomal subunit protein uS4c (195 aa).

The region spanning 82–143 (MRLDNILFRL…KQRSKALIQN (62 aa)) is the S4 RNA-binding domain.

This sequence belongs to the universal ribosomal protein uS4 family. In terms of assembly, part of the 30S ribosomal subunit. Contacts protein S5. The interaction surface between S4 and S5 is involved in control of translational fidelity.

It localises to the plastid. Its subcellular location is the chloroplast. Its function is as follows. One of the primary rRNA binding proteins, it binds directly to 16S rRNA where it nucleates assembly of the body of the 30S subunit. In terms of biological role, with S5 and S12 plays an important role in translational accuracy. In Pillansia templemannii, this protein is Small ribosomal subunit protein uS4c (rps4).